The following is a 164-amino-acid chain: 3-isopropylmalate dehydratase small subunit 1 (164 aa).

This sequence belongs to the LeuD family. LeuD type 2 subfamily. Heterodimer of LeuC and LeuD.

It catalyses the reaction (2R,3S)-3-isopropylmalate = (2S)-2-isopropylmalate. Its pathway is amino-acid biosynthesis; L-leucine biosynthesis; L-leucine from 3-methyl-2-oxobutanoate: step 2/4. In terms of biological role, catalyzes the isomerization between 2-isopropylmalate and 3-isopropylmalate, via the formation of 2-isopropylmaleate. This is 3-isopropylmalate dehydratase small subunit 1 (leuD1) from Pyrococcus furiosus (strain ATCC 43587 / DSM 3638 / JCM 8422 / Vc1).